The chain runs to 287 residues: Co-chaperone protein DjlA (287 aa).

Residues 1-6 (MNFIGK) lie on the Periplasmic side of the membrane. A helical transmembrane segment spans residues 7–30 (FLGLIIGWKLGGFFGAICGVILGH). At 31–287 (LGDKKLYELG…DLICKTKGWK (257 aa)) the chain is on the cytoplasmic side. Positions 221-287 (DAYKVLGVSA…DLICKTKGWK (67 aa)) constitute a J domain.

In terms of assembly, homodimer.

It localises to the cell inner membrane. Regulatory DnaK co-chaperone. Direct interaction between DnaK and DjlA is needed for the induction of the wcaABCDE operon, involved in the synthesis of a colanic acid polysaccharide capsule, possibly through activation of the RcsB/RcsC phosphotransfer signaling pathway. The colanic acid capsule may help the bacterium survive conditions outside the host. In Pasteurella multocida (strain Pm70), this protein is Co-chaperone protein DjlA.